Here is a 477-residue protein sequence, read N- to C-terminus: Bifunctional protein HldE (477 aa).

Positions 1-319 are ribokinase; it reads MKITLPPFDQ…RALQEQEQSG (319 aa). Position 195–198 (195–198) interacts with ATP; it reads NLAE. Aspartate 264 is a catalytic residue. The interval 344-477 is cytidylyltransferase; sequence MTNGCFDLLH…IERMQSAPDT (134 aa).

It in the N-terminal section; belongs to the carbohydrate kinase PfkB family. In the C-terminal section; belongs to the cytidylyltransferase family. In terms of assembly, homodimer.

The catalysed reaction is D-glycero-beta-D-manno-heptose 7-phosphate + ATP = D-glycero-beta-D-manno-heptose 1,7-bisphosphate + ADP + H(+). It carries out the reaction D-glycero-beta-D-manno-heptose 1-phosphate + ATP + H(+) = ADP-D-glycero-beta-D-manno-heptose + diphosphate. Its pathway is nucleotide-sugar biosynthesis; ADP-L-glycero-beta-D-manno-heptose biosynthesis; ADP-L-glycero-beta-D-manno-heptose from D-glycero-beta-D-manno-heptose 7-phosphate: step 1/4. The protein operates within nucleotide-sugar biosynthesis; ADP-L-glycero-beta-D-manno-heptose biosynthesis; ADP-L-glycero-beta-D-manno-heptose from D-glycero-beta-D-manno-heptose 7-phosphate: step 3/4. Functionally, catalyzes the phosphorylation of D-glycero-D-manno-heptose 7-phosphate at the C-1 position to selectively form D-glycero-beta-D-manno-heptose-1,7-bisphosphate. Its function is as follows. Catalyzes the ADP transfer from ATP to D-glycero-beta-D-manno-heptose 1-phosphate, yielding ADP-D-glycero-beta-D-manno-heptose. This Alkalilimnicola ehrlichii (strain ATCC BAA-1101 / DSM 17681 / MLHE-1) protein is Bifunctional protein HldE.